The following is a 1403-amino-acid chain: DNA-directed RNA polymerase subunit beta' (1403 aa).

The Zn(2+) site is built by Cys-71, Cys-73, Cys-86, and Cys-89. Mg(2+)-binding residues include Asp-462, Asp-464, and Asp-466. Positions 811, 885, 892, and 895 each coordinate Zn(2+).

It belongs to the RNA polymerase beta' chain family. In terms of assembly, the RNAP catalytic core consists of 2 alpha, 1 beta, 1 beta' and 1 omega subunit. When a sigma factor is associated with the core the holoenzyme is formed, which can initiate transcription. It depends on Mg(2+) as a cofactor. The cofactor is Zn(2+).

The catalysed reaction is RNA(n) + a ribonucleoside 5'-triphosphate = RNA(n+1) + diphosphate. In terms of biological role, DNA-dependent RNA polymerase catalyzes the transcription of DNA into RNA using the four ribonucleoside triphosphates as substrates. The chain is DNA-directed RNA polymerase subunit beta' from Bartonella bacilliformis (strain ATCC 35685 / KC583 / Herrer 020/F12,63).